The sequence spans 219 residues: MTNRPATPADSRKLWDISPPLSPATPVWPGDTPFQQETAWQMDEHCPVNVGRITLSPHTGAHADAPLHYAADGAPIGEVGLEPYLGRCRVIHCVGATPVVAPHHVEHALNDLPTRVLLRTYKRAPLDQWDTGFCAVAPETIALLAAHGVQLIGIDTPSLDPQESKTMDAHKAVRRHGLAILEGLVLDAVAEGDYELIALPLRFTGLDASPVRAVLRSLD.

A substrate-binding site is contributed by tryptophan 28. 3 residues coordinate Zn(2+): histidine 58, histidine 62, and aspartate 64. The active-site Proton donor/acceptor is histidine 68. Residues histidine 170 and glutamate 182 each contribute to the Zn(2+) site.

This sequence belongs to the Cyclase 1 superfamily. KynB family. In terms of assembly, homodimer. The cofactor is Zn(2+).

It catalyses the reaction N-formyl-L-kynurenine + H2O = L-kynurenine + formate + H(+). It participates in amino-acid degradation; L-tryptophan degradation via kynurenine pathway; L-kynurenine from L-tryptophan: step 2/2. In terms of biological role, catalyzes the hydrolysis of N-formyl-L-kynurenine to L-kynurenine, the second step in the kynurenine pathway of tryptophan degradation. The chain is Kynurenine formamidase from Cupriavidus pinatubonensis (strain JMP 134 / LMG 1197) (Cupriavidus necator (strain JMP 134)).